The chain runs to 332 residues: L-lactate dehydrogenase A chain (332 aa).

Residues 29 to 57 and Arg99 contribute to the NAD(+) site; that span reads GAVG…IEDK. Positions 106, 138, and 169 each coordinate substrate. Asn138 is a binding site for NAD(+). His193 acts as the Proton acceptor in catalysis. Residue Thr248 coordinates substrate.

This sequence belongs to the LDH/MDH superfamily. LDH family. In terms of assembly, homotetramer.

It localises to the cytoplasm. The catalysed reaction is (S)-lactate + NAD(+) = pyruvate + NADH + H(+). The protein operates within fermentation; pyruvate fermentation to lactate; (S)-lactate from pyruvate: step 1/1. Interconverts simultaneously and stereospecifically pyruvate and lactate with concomitant interconversion of NADH and NAD(+). The chain is L-lactate dehydrogenase A chain (LDHA) from Trachemys scripta elegans (Red-eared slider turtle).